Reading from the N-terminus, the 276-residue chain is MRLRFTKMHGLGNDFVMIDAISQKVTITPERARKLADRHFGVGCDQVLVVESPDNPDADFRYRIFNNDGSEVENCGNGARCFAVFVRQRQLTAKSDIVVETAAGLLRLHVLDDNQVTVNMGVPVLAPAQIPFVTPHEQPEYPLQLDNMEITISAVSMGNPHAVTLVDNLASFPVKTLGAQIETHAQFPNRVNAGFMELISRQEVKLRVFERGVGETLACGTGACAAVVSGIVRGLLDTTVAVHLPGGSLSITWEGAEKPVMMTGPAKAVFHGQVKL.

The substrate site is built by N13, Q46, and N66. The Proton donor role is filled by C75. Substrate contacts are provided by residues 76–77 (GN), N159, N192, and 210–211 (ER). Catalysis depends on C219, which acts as the Proton acceptor. A substrate-binding site is contributed by 220–221 (GT).

It belongs to the diaminopimelate epimerase family. As to quaternary structure, homodimer.

The protein localises to the cytoplasm. The catalysed reaction is (2S,6S)-2,6-diaminopimelate = meso-2,6-diaminopimelate. The protein operates within amino-acid biosynthesis; L-lysine biosynthesis via DAP pathway; DL-2,6-diaminopimelate from LL-2,6-diaminopimelate: step 1/1. In terms of biological role, catalyzes the stereoinversion of LL-2,6-diaminopimelate (L,L-DAP) to meso-diaminopimelate (meso-DAP), a precursor of L-lysine and an essential component of the bacterial peptidoglycan. The protein is Diaminopimelate epimerase of Teredinibacter turnerae (strain ATCC 39867 / T7901).